A 295-amino-acid chain; its full sequence is Undecaprenyl-diphosphatase (295 aa).

Transmembrane regions (helical) follow at residues 39–59 (PGAA…LLYF), 97–117 (WYII…QHAI), 121–141 (LRNL…LWIV), 198–218 (AFLM…VKAI), 232–252 (ATIA…IGFL), and 263–283 (FAIY…CGVL).

This sequence belongs to the UppP family.

The protein localises to the cell membrane. The enzyme catalyses di-trans,octa-cis-undecaprenyl diphosphate + H2O = di-trans,octa-cis-undecaprenyl phosphate + phosphate + H(+). In terms of biological role, catalyzes the dephosphorylation of undecaprenyl diphosphate (UPP). Confers resistance to bacitracin. This Bifidobacterium animalis subsp. lactis (strain AD011) protein is Undecaprenyl-diphosphatase.